The sequence spans 322 residues: Helix-loop-helix 34 (322 aa).

Positions 1–11 (METNLSEEKQK) are enriched in basic and acidic residues. A disordered region spans residues 1–23 (METNLSEEKQKPSKSQAQQRRQM). The bHLH domain occupies 8 to 62 (EKQKPSKSQAQQRRQMENYEFSQLANELPLARAISGQHIDKTTMVRLATAYIKLH). PAS domains lie at 82–152 (DSLW…DLNW) and 203–276 (PTPV…FNLG).

In terms of assembly, efficient DNA binding requires dimerization with another bHLH protein. Expressed in a small subset of neurons, probably AVJL and AVJR. Expressed in the AVH neurons.

It is found in the nucleus. In terms of biological role, transcription factor. Involved in specifying AVH neuron identity, acting in concert with unc-42. Involved in serotonin-mediated feeding behavior, probably acting by modulating expression of genes involved in glutamate signaling. The protein is Helix-loop-helix 34 (hlh-34) of Caenorhabditis elegans.